We begin with the raw amino-acid sequence, 184 residues long: MKNVTDSFVSLGHWPSAGSFGFNTDILATNPINLSVVLGVLIFFGKGVLSDLLDNRKQRILNTIRNSEELRGGAIEQLEKARARLRKVEMEAEQFRVNGYSEIEQEKLNLINSTYKTLEQLENYKNETIHFEQQRAINQVRQRVFQQALQGALGTLNSCLNNELHLRTISANIGMFGAMKEITD.

A helical membrane pass occupies residues 27–49 (LATNPINLSVVLGVLIFFGKGVL).

This sequence belongs to the ATPase B chain family. As to quaternary structure, F-type ATPases have 2 components, F(1) - the catalytic core - and F(0) - the membrane proton channel. F(1) has five subunits: alpha(3), beta(3), gamma(1), delta(1), epsilon(1). F(0) has four main subunits: a(1), b(1), b'(1) and c(10-14). The alpha and beta chains form an alternating ring which encloses part of the gamma chain. F(1) is attached to F(0) by a central stalk formed by the gamma and epsilon chains, while a peripheral stalk is formed by the delta, b and b' chains.

It is found in the plastid. It localises to the chloroplast thylakoid membrane. Functionally, f(1)F(0) ATP synthase produces ATP from ADP in the presence of a proton or sodium gradient. F-type ATPases consist of two structural domains, F(1) containing the extramembraneous catalytic core and F(0) containing the membrane proton channel, linked together by a central stalk and a peripheral stalk. During catalysis, ATP synthesis in the catalytic domain of F(1) is coupled via a rotary mechanism of the central stalk subunits to proton translocation. Component of the F(0) channel, it forms part of the peripheral stalk, linking F(1) to F(0). The polypeptide is ATP synthase subunit b, chloroplastic (Eucalyptus globulus subsp. globulus (Tasmanian blue gum)).